The chain runs to 783 residues: Protein involved in starch initiation 1 (783 aa).

A chloroplast-targeting transit peptide spans Met1 to Val27. 3 coiled-coil regions span residues Leu128–Glu309, Leu345–Ala432, and Leu457–Leu512.

Interacts with PTST2; the interaction is essential for the initiation of starch granules biosynthesis in leaf chloroplasts. Interacts with SS4; the interaction is essential for the initiation of starch granules biosynthesis in leaf chloroplasts.

It localises to the plastid. The protein localises to the chloroplast. In terms of biological role, required for the initiation of starch granules biosynthesis in leaf chloroplasts. Involved in determining starch granule number and size in chloroplasts. In Arabidopsis thaliana (Mouse-ear cress), this protein is Protein involved in starch initiation 1.